Reading from the N-terminus, the 478-residue chain is Ribosomal RNA small subunit methyltransferase F (478 aa).

Residues 125-131 (AAAPGSK), glutamate 149, aspartate 176, and aspartate 194 contribute to the S-adenosyl-L-methionine site. Cysteine 247 (nucleophile) is an active-site residue.

This sequence belongs to the class I-like SAM-binding methyltransferase superfamily. RsmB/NOP family.

It is found in the cytoplasm. It carries out the reaction cytidine(1407) in 16S rRNA + S-adenosyl-L-methionine = 5-methylcytidine(1407) in 16S rRNA + S-adenosyl-L-homocysteine + H(+). Functionally, specifically methylates the cytosine at position 1407 (m5C1407) of 16S rRNA. The polypeptide is Ribosomal RNA small subunit methyltransferase F (Serratia proteamaculans (strain 568)).